An 822-amino-acid polypeptide reads, in one-letter code: IQ and AAA domain-containing protein 1-like (822 aa).

The IQ domain maps to 206 to 235 (QDQGAIVIQKVWKGYLQRKRIEQDRRMEME). Positions 338–363 (RQELEAQAQENKKKEQEKNKDKVKEK) are enriched in basic and acidic residues. Disordered regions lie at residues 338–378 (RQEL…KAKK) and 457–484 (REET…KDLT). The segment covering 464-479 (KSPKKKGGKKSGKKKK) has biased composition (basic residues). Position 569–576 (569–576 (GPSGMGKK)) interacts with ATP.

It belongs to the AAA ATPase family.

The sequence is that of IQ and AAA domain-containing protein 1-like (Iqca1l) from Rattus norvegicus (Rat).